The following is a 225-amino-acid chain: Glycerol-3-phosphate acyltransferase (225 aa).

Helical transmembrane passes span 6–26 (FFFF…LIIG), 55–75 (WGIV…IICL), 95–115 (DIAI…SIFN), 135–155 (PFIG…VGYA), 160–180 (IMAT…PGIT), and 187–207 (ILYF…HSNI).

It belongs to the PlsY family. In terms of assembly, probably interacts with PlsX.

Its subcellular location is the cell membrane. The catalysed reaction is an acyl phosphate + sn-glycerol 3-phosphate = a 1-acyl-sn-glycero-3-phosphate + phosphate. The protein operates within lipid metabolism; phospholipid metabolism. Catalyzes the transfer of an acyl group from acyl-phosphate (acyl-PO(4)) to glycerol-3-phosphate (G3P) to form lysophosphatidic acid (LPA). This enzyme utilizes acyl-phosphate as fatty acyl donor, but not acyl-CoA or acyl-ACP. The protein is Glycerol-3-phosphate acyltransferase of Phytoplasma australiense.